The following is a 258-amino-acid chain: UPF0246 protein YaaA (258 aa).

This sequence belongs to the UPF0246 family.

The protein is UPF0246 protein YaaA of Escherichia coli O45:K1 (strain S88 / ExPEC).